The primary structure comprises 194 residues: Phosphoheptose isomerase (194 aa).

The SIS domain occupies 37-194 (ISDSFKQGGK…LIEFEMAKDV (158 aa)). Substrate is bound at residue 52–54 (NGG). Histidine 61 and glutamate 65 together coordinate Zn(2+). Substrate-binding positions include glutamate 65, 93-94 (ND), 119-121 (STS), serine 124, and glutamine 172. Zn(2+) contacts are provided by glutamine 172 and histidine 180.

The protein belongs to the SIS family. GmhA subfamily. As to quaternary structure, homotetramer. Requires Zn(2+) as cofactor.

The protein localises to the cytoplasm. It catalyses the reaction 2 D-sedoheptulose 7-phosphate = D-glycero-alpha-D-manno-heptose 7-phosphate + D-glycero-beta-D-manno-heptose 7-phosphate. It participates in carbohydrate biosynthesis; D-glycero-D-manno-heptose 7-phosphate biosynthesis; D-glycero-alpha-D-manno-heptose 7-phosphate and D-glycero-beta-D-manno-heptose 7-phosphate from sedoheptulose 7-phosphate: step 1/1. Functionally, catalyzes the isomerization of sedoheptulose 7-phosphate in D-glycero-D-manno-heptose 7-phosphate. The polypeptide is Phosphoheptose isomerase (Actinobacillus succinogenes (strain ATCC 55618 / DSM 22257 / CCUG 43843 / 130Z)).